Here is a 460-residue protein sequence, read N- to C-terminus: Phosphomethylpyrimidine synthase (460 aa).

Substrate contacts are provided by residues N80, M109, Y139, H175, 195–197 (SRG), 236–239 (DSLR), and E275. Zn(2+) is bound at residue H279. Residue Y302 coordinates substrate. Zn(2+) is bound at residue H343. The [4Fe-4S] cluster site is built by C423, C426, and C431.

It belongs to the ThiC family. [4Fe-4S] cluster serves as cofactor.

The catalysed reaction is 5-amino-1-(5-phospho-beta-D-ribosyl)imidazole + S-adenosyl-L-methionine = 4-amino-2-methyl-5-(phosphooxymethyl)pyrimidine + CO + 5'-deoxyadenosine + formate + L-methionine + 3 H(+). Its pathway is cofactor biosynthesis; thiamine diphosphate biosynthesis. In terms of biological role, catalyzes the synthesis of the hydroxymethylpyrimidine phosphate (HMP-P) moiety of thiamine from aminoimidazole ribotide (AIR) in a radical S-adenosyl-L-methionine (SAM)-dependent reaction. In Microcystis aeruginosa (strain NIES-843 / IAM M-2473), this protein is Phosphomethylpyrimidine synthase.